The following is a 913-amino-acid chain: Transient receptor potential cation channel protein painless (913 aa).

At M1 to R490 the chain is on the cytoplasmic side. 3 ANK repeats span residues G154 to S189, E260 to S289, and G368 to S397. The chain crosses the membrane as a helical span at residues L491–T511. Topologically, residues Y512–R523 are extracellular. The helical transmembrane segment at A524–E544 threads the bilayer. Residues C545 to Y555 are Cytoplasmic-facing. Residues F556–M576 form a helical membrane-spanning segment. The Extracellular portion of the chain corresponds to E577–R586. Residues V587–L607 traverse the membrane as a helical segment. Residues P608 to K628 lie on the Cytoplasmic side of the membrane. The helical transmembrane segment at S629–G649 threads the bilayer. Topologically, residues K650–S708 are extracellular. The segment at Q656–E675 is disordered. Residues I709–L729 form a helical membrane-spanning segment. Residues L730 to K913 lie on the Cytoplasmic side of the membrane.

Belongs to the transient receptor (TC 1.A.4) family. Present in multidendritic neurons, chordotonal neurons, a subset of cells in the central nervous system and a subset of sensory neurons in the antennal-maxillary complex. Not detected in gonads and dorsal vessels (at protein level). Expressed in peripheral neurons that extend multiple branched dendrites beneath the larval epidermis, similar to vertebrate pain receptors.

Its subcellular location is the membrane. In terms of biological role, receptor-activated non-selective cation channel involved in detection of pain sensation due to high temperature. Involved in heat nociception by being activated by noxious temperature of 38 degrees Celsius. This is Transient receptor potential cation channel protein painless (pain) from Drosophila melanogaster (Fruit fly).